A 117-amino-acid chain; its full sequence is Huntingtin-interacting protein M (117 aa).

2 stretches are compositionally biased toward basic and acidic residues: residues 1–11 and 83–97; these read MSEKKSQEKPC and QDRE…EPSR. Disordered stretches follow at residues 1–25 and 74–117; these read MSEK…SRPE and NINN…RRNG.

As to quaternary structure, may interact with the N-terminus of HD.

The chain is Huntingtin-interacting protein M from Mus musculus (Mouse).